The sequence spans 341 residues: L-threonine 3-dehydrogenase (341 aa).

Cysteine 38 is a binding site for Zn(2+). Residues threonine 40 and histidine 43 each act as charge relay system in the active site. Histidine 63, glutamate 64, cysteine 93, cysteine 96, cysteine 99, and cysteine 107 together coordinate Zn(2+). NAD(+) contacts are provided by residues isoleucine 175, aspartate 195, arginine 200, 262–264 (LGI), and 286–287 (IY).

Belongs to the zinc-containing alcohol dehydrogenase family. Homotetramer. Requires Zn(2+) as cofactor.

The protein localises to the cytoplasm. It carries out the reaction L-threonine + NAD(+) = (2S)-2-amino-3-oxobutanoate + NADH + H(+). Its pathway is amino-acid degradation; L-threonine degradation via oxydo-reductase pathway; glycine from L-threonine: step 1/2. Catalyzes the NAD(+)-dependent oxidation of L-threonine to 2-amino-3-ketobutyrate. The protein is L-threonine 3-dehydrogenase of Salmonella choleraesuis (strain SC-B67).